The chain runs to 354 residues: Homeobox protein Nkx-2.4 (354 aa).

A DNA-binding region (homeobox) is located at residues 188-247 (RRKRRVLFSQAQVYELERRFKQQKYLSAPEREHLASMIHLTPTQVKIWFQNHRYKMKRQA). A disordered region spans residues 245-329 (RQAKDKAAQQ…PALHGPGGGL (85 aa)). A compositionally biased stretch (pro residues) spans 262 to 272 (GPPPPPPPPSP). Over residues 290–304 (GAGTPTPGQGGQQPQ) the composition is skewed to low complexity.

Belongs to the NK-2 homeobox family. In the embryo it is detected in the posterior hypothalamus and later in the head. In the adult it is detected only in testis.

It localises to the nucleus. Its function is as follows. Probable transcription factor. This is Homeobox protein Nkx-2.4 (Nkx2-4) from Mus musculus (Mouse).